A 432-amino-acid chain; its full sequence is Glutamate-gated chloride channel subunit beta (432 aa).

A signal peptide spans 1 to 18 (MSQYMMVAVAAVVAVAGS). Residues 19-249 (SQISRRSTGG…MQLTLKRQFS (231 aa)) are Extracellular-facing. N52 carries an N-linked (GlcNAc...) asparagine glycan. L-glutamate-binding residues include R69, R88, and S155. A disulfide bridge links C164 with C178. S184 is a binding site for L-glutamate. An N-linked (GlcNAc...) asparagine glycan is attached at N219. Cysteines 226 and 237 form a disulfide. The helical transmembrane segment at 250 to 272 (YYLVQLYGPTTMIVIVSWVSFWI) threads the bilayer. At 273 to 277 (DMHST) the chain is on the cytoplasmic side. Residues 278 to 299 (AGRVALGVTTLLTMTTMQAAIN) form a helical membrane-spanning segment. At 300–306 (AKLPPVS) the chain is on the extracellular side. Residues 307-327 (YVKVVDVWLGACQTFVFGALL) traverse the membrane as a helical segment. Residues 328–402 (EYAFVSYQDS…KPDYLPAKID (75 aa)) lie on the Cytoplasmic side of the membrane. The chain crosses the membrane as a helical span at residues 403–426 (YYARFCVPLGFLAFNAIYWTSCLV). Residues 427–432 (MVSRLV) are Extracellular-facing.

This sequence belongs to the ligand-gated ion channel (TC 1.A.9) family. Glutamate-gated chloride channel (TC 1.A.9.4) subfamily. In terms of assembly, pentamer. Expressed in motor neuron commissures at the anterior portion of the worms.

The protein resides in the postsynaptic cell membrane. It localises to the cell membrane. Functionally, glutamate-gated chloride channel subunit; channel properties may be modulated by the formation of heteromeric channels. Glutamate binding triggers a rapidly reversible current, while the anti-helmintic drug ivermectin triggers a permanently open channel configuration. This Haemonchus contortus (Barber pole worm) protein is Glutamate-gated chloride channel subunit beta.